A 278-amino-acid chain; its full sequence is 2-(acetamidomethylene)succinate hydrolase (278 aa).

Chloride is bound by residues isoleucine 41 and 106–107 (SL). Serine 106 functions as the Nucleophile in the catalytic mechanism. Residues aspartate 130 and histidine 258 contribute to the active site.

The protein belongs to the AB hydrolase superfamily. In terms of assembly, homodimer.

It catalyses the reaction 2-(acetamidomethylene)succinate + 2 H2O + H(+) = succinate semialdehyde + acetate + NH4(+) + CO2. It participates in cofactor degradation; B6 vitamer degradation. In terms of biological role, catalyzes the final reaction in the degradation of vitamin B6 from (E)-2-(acetamidomethylene)succinate (E-2AMS) to produce succinic semialdehyde, acetate, ammonia and carbon dioxide. The protein is 2-(acetamidomethylene)succinate hydrolase of Mesorhizobium japonicum (strain LMG 29417 / CECT 9101 / MAFF 303099) (Mesorhizobium loti (strain MAFF 303099)).